The primary structure comprises 670 residues: Solute carrier organic anion transporter family member 1A6 (670 aa).

Over 1–20 (MGEPGKRVGIHRVRCFAKIK) the chain is Cytoplasmic. A helical transmembrane segment spans residues 21–40 (VFLLALIWAYISKILSGVYM). Residues 41–59 (STMLTQLERQFNISTSIVG) lie on the Extracellular side of the membrane. The N-linked (GlcNAc...) asparagine glycan is linked to asparagine 52. Residues 60 to 80 (LINGSFEMGNLLVIVFVSYFG) form a helical membrane-spanning segment. Residues 81-86 (TKLHRP) are Cytoplasmic-facing. Residues 87–111 (IMIGVGCAVMGLGCFIISLPHFLMG) form a helical membrane-spanning segment. Over 112–155 (RYEYETTISPTSNLSSNSFLCVENRSQTLKPTQDPAECVKEIKS) the chain is Extracellular. N-linked (GlcNAc...) asparagine glycans are attached at residues asparagine 124 and asparagine 135. A helical membrane pass occupies residues 156 to 184 (LMWIYVLVGNIIRGIGETPIMPLGISYIE). The Cytoplasmic portion of the chain corresponds to 185–203 (DFAKSENSPLYIGILEVGK). The chain crosses the membrane as a helical span at residues 204–224 (MIGPILGYLMGPFCANIYVDT). Over 225–242 (GSVNTDDLTITPTDTRWV) the chain is Extracellular. A helical transmembrane segment spans residues 243–267 (GAWWIGFLVCAGVNVLTSIPFFFFP). At 268–311 (KTLPKEGLQDNGDGTENAKEEKHRDKAKEENQGIIKEFFLMMKN) the chain is on the cytoplasmic side. A helical transmembrane segment spans residues 312–333 (LFCNPIYMLCVLTSVLQVNGVA). Residues 334–353 (NIVIYKPKYLEHHFGISTAK) are Extracellular-facing. Residues 354-377 (AVFLIGLYTTPSVSAGYLISGFIM) form a helical membrane-spanning segment. Residues 378–381 (KKLK) are Cytoplasmic-facing. Residues 382–405 (ITLKKAAIIALCLFMSECLLSLCN) traverse the membrane as a helical segment. The Extracellular portion of the chain corresponds to 406–513 (FMLTCDTTPI…PDCANKLQYF (108 aa)). Positions 433–488 (NKFLSDCNTRCNCLTKTWDPVCGNNGLAYMSPCLAGCEKSVGTGANMVFQNCSCIR) constitute a Kazal-like domain. 3 cysteine pairs are disulfide-bonded: cysteine 439–cysteine 469, cysteine 445–cysteine 465, and cysteine 454–cysteine 486. Residues asparagine 483 and asparagine 492 are each glycosylated (N-linked (GlcNAc...) asparagine). A helical membrane pass occupies residues 514–536 (LIITVFCCFFYSLATIPGYMVFL). Residues 537-545 (RCMKSEEKS) lie on the Cytoplasmic side of the membrane. The helical transmembrane segment at 546–571 (LGIGLQAFFMRLFAGIPAPIYFGALI) threads the bilayer. The Extracellular portion of the chain corresponds to 572 to 605 (DRTCLHWGTLKCGEPGACRTYEVSSFRRLYLGLP). A helical transmembrane segment spans residues 606-623 (AALRGSIILPSFFILRLI). Over 624-670 (RKLQIPGDTDSSEIELAETKPTEKESECTDMHKSSKVENDGELKTKL) the chain is Cytoplasmic. Threonine 632 bears the Phosphothreonine mark. Positions 633–670 (DSSEIELAETKPTEKESECTDMHKSSKVENDGELKTKL) are disordered. 2 positions are modified to phosphoserine: serine 634 and serine 635. Residues 640-670 (AETKPTEKESECTDMHKSSKVENDGELKTKL) are compositionally biased toward basic and acidic residues.

This sequence belongs to the organo anion transporter (TC 2.A.60) family. In terms of tissue distribution, kidney specific.

It localises to the cell membrane. May mediate the Na(+)-independent transport of organic anions. The protein is Solute carrier organic anion transporter family member 1A6 (Slco1a6) of Mus musculus (Mouse).